The following is a 479-amino-acid chain: Aspartyl/glutamyl-tRNA(Asn/Gln) amidotransferase subunit B (479 aa).

Belongs to the GatB/GatE family. GatB subfamily. Heterotrimer of A, B and C subunits.

It carries out the reaction L-glutamyl-tRNA(Gln) + L-glutamine + ATP + H2O = L-glutaminyl-tRNA(Gln) + L-glutamate + ADP + phosphate + H(+). The enzyme catalyses L-aspartyl-tRNA(Asn) + L-glutamine + ATP + H2O = L-asparaginyl-tRNA(Asn) + L-glutamate + ADP + phosphate + 2 H(+). In terms of biological role, allows the formation of correctly charged Asn-tRNA(Asn) or Gln-tRNA(Gln) through the transamidation of misacylated Asp-tRNA(Asn) or Glu-tRNA(Gln) in organisms which lack either or both of asparaginyl-tRNA or glutaminyl-tRNA synthetases. The reaction takes place in the presence of glutamine and ATP through an activated phospho-Asp-tRNA(Asn) or phospho-Glu-tRNA(Gln). The sequence is that of Aspartyl/glutamyl-tRNA(Asn/Gln) amidotransferase subunit B from Streptococcus mutans serotype c (strain ATCC 700610 / UA159).